The following is a 251-amino-acid chain: Fibroblast growth factor 23 (251 aa).

The N-terminal stretch at 1–24 (MLGARLRLWVCALCSVCSMSVLRA) is a signal peptide. An intrachain disulfide couples Cys-95 to Cys-113. O-linked (GalNAc) threonine glycosylation is found at Thr-171 and Thr-178. A disordered region spans residues 172-221 (PIPRRHTRSAEDDSERDPLNVLKPRARMTPAPASCSQELPSAEDNSPMAS). Ser-180 bears the Phosphoserine; by FAM20C mark. A compositionally biased stretch (polar residues) spans 205–219 (SCSQELPSAEDNSPM).

Belongs to the heparin-binding growth factors family. As to quaternary structure, interacts with FGFR1, FGFR2, FGFR3 and FGFR4. Affinity between fibroblast growth factors (FGFs) and their receptors is increased by KL and heparan sulfate glycosaminoglycans that function as coreceptors. In terms of processing, following secretion this protein is inactivated by cleavage into a N-terminal fragment and a C-terminal fragment. The processing is effected by proprotein convertases. Post-translationally, O-glycosylated at Thr-171 and Thr-178 by GALNT3 and glycosylation of Thr-178 requires previous glycosylation at Thr171. Glycosylation is necessary for secretion; it blocks processing by proprotein convertases when the O-glycan is alpha 2,6-sialylated. Competition between proprotein convertase cleavage and block of cleavage by O-glycosylation determines the level of secreted active FGF23. Phosphorylation at Ser-180 mediated by FAM20C slows down glycosylation at Thr-178 notably. In terms of tissue distribution, expressed in osteogenic cells particularly during phases of active bone remodeling. In adult trabecular bone, expressed in osteocytes and flattened bone-lining cells (inactive osteoblasts).

The protein localises to the secreted. In terms of biological role, regulator of phosphate homeostasis. Inhibits renal tubular phosphate transport by reducing SLC34A1 levels. Up-regulates EGR1 expression in the presence of KL. Acts directly on the parathyroid to decrease PTH secretion. Regulator of vitamin-D metabolism. Negatively regulates osteoblast differentiation and matrix mineralization. The protein is Fibroblast growth factor 23 (FGF23) of Homo sapiens (Human).